The primary structure comprises 34 residues: SGSDGGVCPKILQRCRRDSDCPGACICRGNGYCG.

Positions 1–34 (SGSDGGVCPKILQRCRRDSDCPGACICRGNGYCG) form a cross-link, cyclopeptide (Ser-Gly). Intrachain disulfides connect Cys8–Cys25, Cys15–Cys27, and Cys21–Cys33.

This is a cyclic peptide.

The protein localises to the secreted. In terms of biological role, inhibits trypsin; probably participates in a plant defense mechanism. The chain is Trypsin inhibitor 1 from Momordica cochinchinensis (Spiny bitter cucumber).